We begin with the raw amino-acid sequence, 224 residues long: Transmembrane protein C16orf54 (224 aa).

O-linked (GalNAc...) threonine glycosylation occurs at Thr4. A helical membrane pass occupies residues 32–52; that stretch reads IPIMLVLATLAALFILTTAVL. 2 disordered regions span residues 104–138 and 152–203; these read TDRA…SNLG and WGPQ…GLQP. Residues Thr112 and Thr116 each carry the phosphothreonine modification. At Ser194 the chain carries Phosphoserine.

O-glycosylated with core 1 or possibly core 8 glycans.

The protein resides in the membrane. The chain is Transmembrane protein C16orf54 (C16orf54) from Homo sapiens (Human).